Reading from the N-terminus, the 179-residue chain is Interleukin-22 (179 aa).

An N-terminal signal peptide occupies residues 1-33 (MAVLQKSMSFSLMGTLAASCLLLIALWAQEANA). 2 disulfide bridges follow: cysteine 40–cysteine 132 and cysteine 89–cysteine 178. N-linked (GlcNAc...) asparagine glycans are attached at residues asparagine 54, asparagine 68, and asparagine 97.

It belongs to the IL-10 family.

The protein resides in the secreted. Its function is as follows. Cytokine that plays a critical role in modulating tissue responses during inflammation. Plays an essential role in the regeneration of epithelial cells to maintain barrier function after injury and for the prevention of further tissue damage. Unlike most of the cytokines, has no effect on immune cells. Signals through a heterodimeric receptor composed of two subunits, the specific receptor IL22RA1 which is present on non-immune cells in many organs and the shared subunit IL10RB. Ligation of IL22RA1 with IL22 induces activation of the tyrosine kinases JAK1 and TYK2, which in turn activates STAT3. In turn, promotes cell survival and proliferation through STAT3, ERK1/2 and PI3K/AKT pathways. Promotes phosphorylation of GSK3B at 'Ser-9' and CTTN. Promotes epithelial cell spreading. In Mus musculus (Mouse), this protein is Interleukin-22 (Il22).